Here is an 85-residue protein sequence, read N- to C-terminus: MANVTVRNLPDEVHRALRVRAAMHGRSTEAEIRDILETTVRPPERVKLGSLLASIAHEAGGLTDAEAEHFNQLRDKTPAEPMSFE.

A compositionally biased stretch (basic and acidic residues) spans Glu66 to Pro78. Residues Glu66 to Glu85 are disordered.

To P.syringae pv tomato plasmid stability protein StbC.

Involved in plasmid stability. This is Putative plasmid stability protein y4jJ from Sinorhizobium fredii (strain NBRC 101917 / NGR234).